The following is an 835-amino-acid chain: Peptide transporter family 1 (835 aa).

A run of 11 helical transmembrane segments spans residues 86–106 (IFFNGFTVLCYTTPLLGSIVA), 113–133 (FWTIFSVSILYAIGQVVLALA), 150–170 (GLLIIAFGTGGIKPCVSAFGG), 183–203 (LFFSMFYFSINAGSMISTFIS), 222–242 (FGIPAILMIVATLVFMGGSFW), 325–345 (MFLPVPMFWALYDQQGSVWLI), 368–388 (LNAVLILLFIPLFQVIIYPVA), 401–421 (VTGGLLASLAFLITGFVQLQV), 697–717 (ILWQIPQIVVITAAEILFSIT), 738–758 (WLLTTAAGDSIIVVITILNLF), and 765–785 (FFVYAAAMFVVIAIFALLSIF). Residues 814-835 (PRYSIDNKGFHPDEKDTFDMHF) are disordered. Basic and acidic residues predominate over residues 821-835 (KGFHPDEKDTFDMHF).

The protein belongs to the major facilitator superfamily. Proton-dependent oligopeptide transporter (POT/PTR) (TC 2.A.17) family. In terms of tissue distribution, expressed specifically in the intestine.

The protein resides in the apical cell membrane. Functionally, low-affinity peptide transporter that is necessary for proton-dependent uptake of di- or tripeptides, and to a minor extent tetrapeptides, in the intestine. Transport is independent of sodium and chloride ions. Controls the uptake of dietary fatty acids, plays a role in fatty acid synthesis and is responsible for dipeptide-induced acidification of the intestine. Regulates cellular pH differences together with the antiporter protein, nhx-2. Amino acid uptake and absorption levels influence the insulin signaling/daf-2 and let-363/TOR pathways, subsequently affecting the stress response and longevity of the organism. It is required for the uptake of the L-enantiomers of various amino acids, including L-glutamate. In response to the availability of amino acid nutrients, may play a role in promoting reproduction and fertility. The sequence is that of Peptide transporter family 1 from Caenorhabditis elegans.